A 350-amino-acid polypeptide reads, in one-letter code: Induced myeloid leukemia cell differentiation protein Mcl-1 homolog (350 aa).

Lysine 5 participates in a covalent cross-link: Glycyl lysine isopeptide (Lys-Gly) (interchain with G-Cter in ubiquitin). The interval 23 to 95 (AGSGGASSSG…GPNVSATPPR (73 aa)) is disordered. Residues 31–41 (SGGRLLASGRE) are compositionally biased toward low complexity. Residues 50 to 61 (GGEAGAVIGGSA) show a composition bias toward gly residues. Residues 104 to 175 (RASPPEEMEG…PAEEEEDELY (72 aa)) are PEST-like. The residue at position 121 (serine 121) is a Phosphoserine. Residue lysine 136 forms a Glycyl lysine isopeptide (Lys-Gly) (interchain with G-Cter in ubiquitin) linkage. The disordered stretch occupies residues 150–169 (ASSGPGMDGSLPSTPPPAEE). Serine 159 is modified (phosphoserine; by GSK3-alpha and GSK3-beta). The residue at position 162 (serine 162) is a Phosphoserine. Residue threonine 163 is modified to Phosphothreonine. Residues lysine 194 and lysine 197 each participate in a glycyl lysine isopeptide (Lys-Gly) (interchain with G-Cter in ubiquitin) cross-link. The BH3 signature appears at 209–223 (ALETLQRVGDGVQRN). The short motif at 252–272 (HVFSDGVTNWGRIVTLISFGA) is the BH1 element. Residues 304-319 (DWLVKQRGWDGFVEFF) carry the BH2 motif. Residues 327–349 (GIRNVLLAFAGVAGVGAGLAYLI) traverse the membrane as a helical segment.

The protein belongs to the Bcl-2 family. As to quaternary structure, interacts with HIF3A (via C-terminus domain). Interacts with BOK, BIK, BAX, BAK1, and TPT1. Interacts with unphosphorylated BAD. Interacts with BMF, BBC3 and PMAIP1. Interacts with BOP. Interacts with BCL2L11; may sequester BCL2L11 to prevent its pro-apoptotic activity. Interacts with GIMAP5 and HSPA8/HSC70; the interaction between HSPA8 and MCL1 is impaired in the absence of GIMAP5. Cleaved by CASP3 during apoptosis, yielding a pro-apoptotic C-terminal fragment. Post-translationally, rapidly degraded in the absence of phosphorylation in the PEST region. In terms of processing, phosphorylated on Ser-159, by GSK3, in response to IL3/interleukin-3 withdrawal. Phosphorylation at Ser-159 induces ubiquitination and proteasomal degradation, abrogating the anti-apoptotic activity. Treatment with taxol or okadaic acid induces phosphorylation on additional sites. Ubiquitinated. Ubiquitination is induced by phosphorylation at Ser-159. Deubiquitinated by USP20; leading to increased stability. Detected in peripheral blood mononuclear cells and bone marrow.

It localises to the membrane. The protein localises to the cytoplasm. It is found in the mitochondrion. Its subcellular location is the nucleus. The protein resides in the nucleoplasm. Involved in the regulation of apoptosis versus cell survival, and in the maintenance of viability but not of proliferation. Mediates its effects by interactions with a number of other regulators of apoptosis. The chain is Induced myeloid leukemia cell differentiation protein Mcl-1 homolog (MCL1) from Canis lupus familiaris (Dog).